We begin with the raw amino-acid sequence, 199 residues long: Recombination protein RecR (199 aa).

The C4-type zinc-finger motif lies at 60–75 (CARCHTFTEGEVCSTC). In terms of domain architecture, Toprim spans 83–178 (SRLAVVETPA…HVTRLARGVP (96 aa)).

This sequence belongs to the RecR family.

In terms of biological role, may play a role in DNA repair. It seems to be involved in an RecBC-independent recombinational process of DNA repair. It may act with RecF and RecO. This chain is Recombination protein RecR, found in Paracidovorax citrulli (strain AAC00-1) (Acidovorax citrulli).